Here is a 316-residue protein sequence, read N- to C-terminus: D-alanine--D-alanine ligase (316 aa).

The ATP-grasp domain maps to 104–303 (KRVWLQHGLP…YADLCVAILA (200 aa)). An ATP-binding site is contributed by 130–185 (PDRLGLPLILKPPHEGSTVGITKVAGYSDMKAAYELAARFDAEVLAEQFITGRELT). D257, E270, and N272 together coordinate Mg(2+).

The protein belongs to the D-alanine--D-alanine ligase family. Mg(2+) serves as cofactor. It depends on Mn(2+) as a cofactor.

The protein resides in the cytoplasm. It carries out the reaction 2 D-alanine + ATP = D-alanyl-D-alanine + ADP + phosphate + H(+). It functions in the pathway cell wall biogenesis; peptidoglycan biosynthesis. Cell wall formation. The polypeptide is D-alanine--D-alanine ligase (Bordetella parapertussis (strain 12822 / ATCC BAA-587 / NCTC 13253)).